Here is a 333-residue protein sequence, read N- to C-terminus: 4-hydroxy-3-methylbut-2-enyl diphosphate reductase (333 aa).

Cys-20 contacts [4Fe-4S] cluster. (2E)-4-hydroxy-3-methylbut-2-enyl diphosphate-binding residues include His-49 and His-85. The dimethylallyl diphosphate site is built by His-49 and His-85. His-49 and His-85 together coordinate isopentenyl diphosphate. Cys-107 lines the [4Fe-4S] cluster pocket. Residue His-135 coordinates (2E)-4-hydroxy-3-methylbut-2-enyl diphosphate. His-135 contacts dimethylallyl diphosphate. Residue His-135 participates in isopentenyl diphosphate binding. Glu-137 serves as the catalytic Proton donor. Thr-176 is a (2E)-4-hydroxy-3-methylbut-2-enyl diphosphate binding site. Residue Cys-206 participates in [4Fe-4S] cluster binding. (2E)-4-hydroxy-3-methylbut-2-enyl diphosphate-binding residues include Ser-234, Ser-235, Asn-236, and Ser-279. Dimethylallyl diphosphate is bound by residues Ser-234, Ser-235, Asn-236, and Ser-279. Isopentenyl diphosphate contacts are provided by Ser-234, Ser-235, Asn-236, and Ser-279.

Belongs to the IspH family. [4Fe-4S] cluster is required as a cofactor.

It catalyses the reaction isopentenyl diphosphate + 2 oxidized [2Fe-2S]-[ferredoxin] + H2O = (2E)-4-hydroxy-3-methylbut-2-enyl diphosphate + 2 reduced [2Fe-2S]-[ferredoxin] + 2 H(+). The enzyme catalyses dimethylallyl diphosphate + 2 oxidized [2Fe-2S]-[ferredoxin] + H2O = (2E)-4-hydroxy-3-methylbut-2-enyl diphosphate + 2 reduced [2Fe-2S]-[ferredoxin] + 2 H(+). Its pathway is isoprenoid biosynthesis; dimethylallyl diphosphate biosynthesis; dimethylallyl diphosphate from (2E)-4-hydroxy-3-methylbutenyl diphosphate: step 1/1. It participates in isoprenoid biosynthesis; isopentenyl diphosphate biosynthesis via DXP pathway; isopentenyl diphosphate from 1-deoxy-D-xylulose 5-phosphate: step 6/6. In terms of biological role, catalyzes the conversion of 1-hydroxy-2-methyl-2-(E)-butenyl 4-diphosphate (HMBPP) into a mixture of isopentenyl diphosphate (IPP) and dimethylallyl diphosphate (DMAPP). Acts in the terminal step of the DOXP/MEP pathway for isoprenoid precursor biosynthesis. The sequence is that of 4-hydroxy-3-methylbut-2-enyl diphosphate reductase from Rhizobium etli (strain CIAT 652).